The sequence spans 38 residues: Large ribosomal subunit protein bL36 (38 aa).

This sequence belongs to the bacterial ribosomal protein bL36 family.

This chain is Large ribosomal subunit protein bL36, found in Anaeromyxobacter dehalogenans (strain 2CP-1 / ATCC BAA-258).